A 67-amino-acid chain; its full sequence is uncharacterized protein (67 aa).

2 consecutive transmembrane segments (helical) span residues 6–26 (GQLWIVFMWVSGVVCGICVLM) and 38–58 (NNIIIIIIIIMMIKIMKIIII).

The protein localises to the membrane. This is an uncharacterized protein from Dictyostelium discoideum (Social amoeba).